The chain runs to 314 residues: Very long chain fatty acid elongase 4 (314 aa).

Residue asparagine 20 is glycosylated (N-linked (GlcNAc...) asparagine). The next 7 membrane-spanning stretches (helical) occupy residues 42-62 (LMQS…FVWL), 78-98 (VLII…RELF), 127-147 (ALWW…FFIL), 165-185 (MFTL…FFGA), 188-208 (NSFI…GPWI), 217-237 (YLTM…ALSL), and 247-267 (MHWA…NFYI). Positions 274–314 (KKPKTGKTAMNGISANGVSKSEKQLVIENGKKQKNGKAKGD) are disordered. A compositionally biased stretch (basic and acidic residues) spans 293–304 (KSEKQLVIENGK). Residues 305-314 (KQKNGKAKGD) show a composition bias toward basic residues. The Di-lysine motif signature appears at 310 to 314 (KAKGD).

The protein belongs to the ELO family. ELOVL4 subfamily. Oligomer. In terms of processing, N-glycosylated. As to expression, expressed mainly in retina. Also expressed in skin and thymus.

It localises to the endoplasmic reticulum membrane. It catalyses the reaction a very-long-chain acyl-CoA + malonyl-CoA + H(+) = a very-long-chain 3-oxoacyl-CoA + CO2 + CoA. It carries out the reaction hexacosanoyl-CoA + malonyl-CoA + H(+) = 3-oxooctacosanyol-CoA + CO2 + CoA. The catalysed reaction is octacosanoyl-CoA + malonyl-CoA + H(+) = 3-oxo-triacontanoyl-CoA + CO2 + CoA. The enzyme catalyses triacontanoyl-CoA + malonyl-CoA + H(+) = 3-oxo-dotriacontanoyl-CoA + CO2 + CoA. It catalyses the reaction (19Z,22Z,25Z,28Z,31Z)-tetratriacontapentaenoyl-CoA + malonyl-CoA + H(+) = 3-oxo-(21Z,24Z,27Z,30Z,33Z)-hexatriacontapentaenoyl-CoA + CO2 + CoA. It carries out the reaction (4Z,7Z,10Z,13Z,16Z,19Z)-docosahexaenoyl-CoA + malonyl-CoA + H(+) = 3-oxo-(6Z,9Z,12Z,15Z,18Z,21Z)-tetracosahexaenoyl-CoA + CO2 + CoA. The catalysed reaction is (7Z,10Z,13Z,16Z)-docosatetraenoyl-CoA + malonyl-CoA + H(+) = (9Z,12Z,15Z,18Z)-3-oxotetracosatetraenoyl-CoA + CO2 + CoA. The enzyme catalyses (11Z,14Z,17Z,20Z,23Z)-hexacosapentaenoyl-CoA + malonyl-CoA + H(+) = 3-oxo-(13Z,16Z,19Z,22Z,25Z)-octacosapentaenoyl-CoA + CO2 + CoA. It catalyses the reaction (13Z,16Z,19Z,22Z,25Z)-octacosapentaenoyl-CoA + malonyl-CoA + H(+) = 3-oxo-(15Z,18Z,21Z,24Z,27Z)-triacontapentaenoyl-CoA + CO2 + CoA. It carries out the reaction (15Z,18Z,21Z,24Z,27Z)-triacontapentaenoyl-CoA + malonyl-CoA + H(+) = 3-oxo-(17Z,20Z,23Z,26Z,29Z)-dotriacontapentaenoyl-CoA + CO2 + CoA. The catalysed reaction is (17Z,20Z,23Z,26Z,29Z)-dotriacontapentaenoyl-CoA + malonyl-CoA + H(+) = 3-oxo-(19Z,22Z,25Z,28Z,31Z)-tetratriacontapentaenoyl-CoA + CO2 + CoA. The enzyme catalyses (21Z,24Z,27Z,30Z,33Z)-hexatriacontapentaenoyl-CoA + malonyl-CoA + H(+) = 3-oxo-(23Z,26Z,29Z,32Z,35Z)-octatriacontapentaenoyl-CoA + CO2 + CoA. It catalyses the reaction (11Z,14Z,17Z,20Z)-hexacosatetraenoyl-CoA + malonyl-CoA + H(+) = (13Z,16Z,19Z,22Z)-3-oxooctacosatetraenoyl-CoA + CO2 + CoA. It carries out the reaction (13Z,16Z,19Z,22Z)-octacosatetraenoyl-CoA + malonyl-CoA + H(+) = 3-oxo-(15Z,18Z,21Z,24Z)-triacontatetraenoyl-CoA + CO2 + CoA. The catalysed reaction is (15Z,18Z,21Z,24Z)-triacontatetraenoyl-CoA + malonyl-CoA + H(+) = 3-oxo-(17Z,20Z,23Z,26Z)-dotriacontatetraenoyl-CoA + CO2 + CoA. The enzyme catalyses (17Z,20Z,23Z,26Z)-dotriacontatetraenoyl-CoA + malonyl-CoA + H(+) = 3-oxo-(19Z,22Z,25Z,28Z)-tetratriacontatetraenoyl-CoA + CO2 + CoA. It catalyses the reaction (19Z,22Z,25Z,28Z)-tetratriacontatetraenoyl-CoA + malonyl-CoA + H(+) = 3-oxo-(21Z,24Z,27Z,30Z)-hexatriacontatetraenoyl-CoA + CO2 + CoA. It carries out the reaction (21Z,24Z,27Z,30Z)-hexatriacontatetraenoyl-CoA + malonyl-CoA + H(+) = 3-oxo-(23Z,26Z,29Z,32Z)-octatriacontatetraenoyl-CoA + CO2 + CoA. The catalysed reaction is (6Z,9Z,12Z,15Z,18Z,21Z)-tetracosahexaenoyl-CoA + malonyl-CoA + H(+) = 3-oxo-(8Z,11Z,14Z,17Z,20Z,23Z)-hexacosahexaenoyl-CoA + CO2 + CoA. The enzyme catalyses (8Z,11Z,14Z,17Z,20Z,23Z)-hexacosahexaenoyl-CoA + malonyl-CoA + H(+) = 3-oxo-(10Z,13Z,16Z,19Z,22Z,25Z)-octacosahexaenoyl-CoA + CO2 + CoA. It catalyses the reaction (10Z,13Z,16Z,19Z,22Z,25Z)-octacosahexaenoyl-CoA + malonyl-CoA + H(+) = 3-oxo-(12Z,15Z,18Z,21Z,24Z,27Z)-triacontahexaenoyl-CoA + CO2 + CoA. It carries out the reaction (12Z,15Z,18Z,21Z,24Z,27Z)-triacontahexaenoyl-CoA + malonyl-CoA + H(+) = 3-oxo-(14Z,17Z,20Z,23Z,26Z,29Z)-dotriacontahexaenoyl-CoA + CO2 + CoA. The catalysed reaction is (14Z,17Z,20Z,23Z,26Z,29Z)-dotriacontahexaenoyl-CoA + malonyl-CoA + H(+) = 3-oxo-(16Z,19Z,22Z,25Z,28Z,31Z)-tetratriacontahexaenoyl-CoA + CO2 + CoA. The enzyme catalyses (16Z,19Z,22Z,25Z,28Z,31Z)-tetratriacontahexaenoyl-CoA + malonyl-CoA + H(+) = 3-oxo-(18Z,21Z,24Z,27Z,30Z,33Z)-hexatriacontahexaenoyl-CoA + CO2 + CoA. It catalyses the reaction (9Z,12Z,15Z,18Z,21Z)-tetracosapentaenoyl-CoA + malonyl-CoA + H(+) = 3-oxo-(11Z,14Z,17Z,20Z,23Z)-hexacosapentaenoyl-CoA + CO2 + CoA. Its pathway is lipid metabolism; fatty acid biosynthesis. Its function is as follows. Catalyzes the first and rate-limiting reaction of the four reactions that constitute the long-chain fatty acids elongation cycle. This endoplasmic reticulum-bound enzymatic process allows the addition of 2 carbons to the chain of long- and very long-chain fatty acids (VLCFAs) per cycle. Condensing enzyme that catalyzes the synthesis of very long chain saturated (VLC-SFA) and polyunsaturated (PUFA) fatty acids that are involved in multiple biological processes as precursors of membrane lipids and lipid mediators. May play a critical role in early brain and skin development. This chain is Very long chain fatty acid elongase 4, found in Macaca fascicularis (Crab-eating macaque).